The chain runs to 126 residues: Non-specific lipid-transfer protein 13 (126 aa).

The N-terminal stretch at methionine 1–serine 20 is a signal peptide. Cystine bridges form between cysteine 36/cysteine 85, cysteine 46/cysteine 61, cysteine 62/cysteine 109, and cysteine 83/cysteine 123.

The protein belongs to the plant LTP family.

Plant non-specific lipid-transfer proteins transfer phospholipids as well as galactolipids across membranes. May play a role in wax or cutin deposition in the cell walls of expanding epidermal cells and certain secretory tissues. This Arabidopsis thaliana (Mouse-ear cress) protein is Non-specific lipid-transfer protein 13 (LTP13).